A 187-amino-acid chain; its full sequence is Ribosome-recycling factor (187 aa).

This sequence belongs to the RRF family.

Its subcellular location is the cytoplasm. Its function is as follows. Responsible for the release of ribosomes from messenger RNA at the termination of protein biosynthesis. May increase the efficiency of translation by recycling ribosomes from one round of translation to another. In Methylobacterium sp. (strain 4-46), this protein is Ribosome-recycling factor.